Here is a 70-residue protein sequence, read N- to C-terminus: Metallothionein-like protein 1 (70 aa).

The protein belongs to the metallothionein superfamily. Type 15 family.

In terms of biological role, metallothioneins have a high content of cysteine residues that bind various heavy metals. The protein is Metallothionein-like protein 1 (MT1) of Festuca rubra (Red fescue).